We begin with the raw amino-acid sequence, 395 residues long: Probable FMNH2-dependent monooxygenase SfnC (395 aa).

In terms of biological role, involved in the dimethyl sulfide degradation pathway. In Pseudomonas putida (Arthrobacter siderocapsulatus), this protein is Probable FMNH2-dependent monooxygenase SfnC.